Here is an 845-residue protein sequence, read N- to C-terminus: ABC transporter A family member 9 (845 aa).

7 helical membrane-spanning segments follow: residues 33-53, 192-212, 235-255, 292-312, 318-338, 347-367, and 417-437; these read CVQI…NFWV, AFVA…FLGG, IASL…MPLF, IYFI…FAVF, FAMF…SFFL, AASI…SILS, and SKII…ALYL. In terms of domain architecture, ABC transporter spans 531–762; sequence VIIEGLTKHY…FGDGYSVRIN (232 aa). Position 565-572 (565-572) interacts with ATP; sequence GANGAGKT.

It belongs to the ABC transporter superfamily. ABCA family.

It is found in the membrane. This chain is ABC transporter A family member 9 (abcA9), found in Dictyostelium discoideum (Social amoeba).